The following is a 79-amino-acid chain: Mycoredoxin 1 (79 aa).

A Glutaredoxin domain is found at 1–79 (MSNVTIYATD…EVIAKIEALA (79 aa)).

It belongs to the glutaredoxin family.

The protein resides in the cytoplasm. It carries out the reaction [mycoredoxin]-L-cysteine + arseno-mycothiol + H(+) = [mycoredoxin]-S-mycothiol-L-cysteine + arsenite. Functionally, involved in defense against toxic arsenate. Involved in the mycothiol/myoredoxin redox pathway which uses a mycothioltransferase mechanism; functions as a monothiol mixed disulfide reductase and is recycled by a second mycothiol forming mycothione which in turn is reduced in a NADPH-dependent manner. This is Mycoredoxin 1 (mrx1) from Corynebacterium glutamicum (strain ATCC 13032 / K051).